Reading from the N-terminus, the 596-residue chain is MKHIRNFSIIAHIDHGKSTLSDRLIQECGGLSDREMAAQVLDSMDLERERGITIKAQSVTLDYKAKDGETYQLNFIDTPGHVDFSYEVSRSLAACEGALLVVDAGQGVEAQTLANCYTALDMDLDVVPVLNKIDLPQADPERVAEEIEDIVGIEAADAVRCSAKTGLGISDVLETIVAQIPPPEGDPEAPLQALIIDSWFDSYLGVVSLVRIKHGVLKKGDKFKVMSTGQTHTADRVGIFTPKQTDTAQLSTGEVGFVIAGIKEIHGAPVGDTLTLAKNGADKPLPGFKKVKPQVYAGVFPISTDDYENFRDALNKLSLNDASLFFEPETSSALGFGFRIGYLGLLHMEIIQERLEREYNLDLITTAPTVVYEVVTTKGETIYVDNPSDLPPMNNIEEMREPIVETNILVPKEYLGNVITLCIEKRGVQTNMVYHGNQVAITYDMPMAEVVMDFFDRLKSTSRGYASLEYNFKRFEAADMVRLDVLINGDRVDALAMILHKANVRYQGLALVNKMKELIPRQMFDIAIQAAVGSQIIARSSVKALRKDVTAKCYGGDVSRKKKLLQKQKEGKKRMKQVGNVEVPQEAFLAVLKINE.

In terms of domain architecture, tr-type G spans 2–184; it reads KHIRNFSIIA…TIVAQIPPPE (183 aa). GTP-binding positions include 14–19 and 131–134; these read DHGKST and NKID.

This sequence belongs to the TRAFAC class translation factor GTPase superfamily. Classic translation factor GTPase family. LepA subfamily.

Its subcellular location is the cell inner membrane. The enzyme catalyses GTP + H2O = GDP + phosphate + H(+). Required for accurate and efficient protein synthesis under certain stress conditions. May act as a fidelity factor of the translation reaction, by catalyzing a one-codon backward translocation of tRNAs on improperly translocated ribosomes. Back-translocation proceeds from a post-translocation (POST) complex to a pre-translocation (PRE) complex, thus giving elongation factor G a second chance to translocate the tRNAs correctly. Binds to ribosomes in a GTP-dependent manner. This chain is Elongation factor 4, found in Shewanella loihica (strain ATCC BAA-1088 / PV-4).